A 393-amino-acid chain; its full sequence is NADH-quinone oxidoreductase subunit D (393 aa).

The protein belongs to the complex I 49 kDa subunit family. As to quaternary structure, NDH-1 is composed of 14 different subunits. Subunits NuoB, C, D, E, F, and G constitute the peripheral sector of the complex.

Its subcellular location is the cell inner membrane. The enzyme catalyses a quinone + NADH + 5 H(+)(in) = a quinol + NAD(+) + 4 H(+)(out). NDH-1 shuttles electrons from NADH, via FMN and iron-sulfur (Fe-S) centers, to quinones in the respiratory chain. The immediate electron acceptor for the enzyme in this species is believed to be ubiquinone. Couples the redox reaction to proton translocation (for every two electrons transferred, four hydrogen ions are translocated across the cytoplasmic membrane), and thus conserves the redox energy in a proton gradient. The protein is NADH-quinone oxidoreductase subunit D of Ehrlichia ruminantium (strain Gardel).